Consider the following 273-residue polypeptide: Photosystem I chlorophyll a/b-binding protein 3-1, chloroplastic (273 aa).

The transit peptide at 1–39 (MAAQALVSSSLTSSVQTARQIFGSKPVASASQKKSSFVV) directs the protein to the chloroplast. Trp56 contacts chlorophyll b. The chlorophyll a site is built by Phe76, Ser82, and Glu100. Arg105 provides a ligand contact to chlorophyll b. Residues 106-126 (FAMLGAAGAIAPEILGKAGLI) traverse the membrane as a helical segment. Ile140 is a chlorophyll b binding site. Residues 146-166 (YTYWADNYTLFVLEMALMGFA) form a helical membrane-spanning segment. Chlorophyll b-binding residues include Glu167 and Arg170. The residue at position 195 (Ser195) is a Phosphoserine. Chlorophyll a is bound by residues Lys224, Glu225, Asn228, Arg230, Gln242, and His257. The chain crosses the membrane as a helical span at residues 231 to 251 (LAMLAILGYFIQGLVTGVGPY). Phe272 is a chlorophyll b binding site.

Belongs to the light-harvesting chlorophyll a/b-binding (LHC) protein family. The LHC complex consists of chlorophyll a-b binding proteins. Red-emitting heterodimer with LHCA2. Interacts with LHCA5. Binds to carotenoids. The cofactor is Binds at least 14 chlorophylls (8 Chl-a and 6 Chl-b) and carotenoids such as lutein and neoxanthin.. Photoregulated by reversible phosphorylation of its threonine residues.

It localises to the plastid. The protein resides in the chloroplast thylakoid membrane. In terms of biological role, the light-harvesting complex (LHC) functions as a light receptor, it captures and delivers excitation energy to photosystems with which it is closely associated, here photosystem I. The sequence is that of Photosystem I chlorophyll a/b-binding protein 3-1, chloroplastic from Arabidopsis thaliana (Mouse-ear cress).